The following is a 369-amino-acid chain: Probable trehalose-phosphate phosphatase D (369 aa).

A disordered region spans residues 63 to 85; that stretch reads RASSPTRTRPGNISPLPESDEED.

The protein belongs to the trehalose phosphatase family. It depends on a divalent metal cation as a cofactor.

It carries out the reaction alpha,alpha-trehalose 6-phosphate + H2O = alpha,alpha-trehalose + phosphate. The protein operates within glycan biosynthesis; trehalose biosynthesis. Removes the phosphate from trehalose 6-phosphate to produce free trehalose. Trehalose accumulation in plant may improve abiotic stress tolerance. In Arabidopsis thaliana (Mouse-ear cress), this protein is Probable trehalose-phosphate phosphatase D (TPPD).